The chain runs to 284 residues: Avenin-like b6 (284 aa).

The N-terminal stretch at 1 to 18 (MKVFILALLALAATTAIA) is a signal peptide.

Belongs to the prolamin family. Post-translationally, contains disulfide bonds.

Functionally, seed storage protein. Might be integrated via inter-chain disulfide bonds within the glutenin polymer. This is Avenin-like b6 from Triticum aestivum (Wheat).